The chain runs to 376 residues: UDP-N-acetylglucosamine 2-epimerase (376 aa).

Substrate-binding positions include Arg-10, Lys-15, Asp-95, Glu-117, His-213, Gln-271, Phe-276, 290 to 292 (SGG), Glu-296, and Arg-313.

The protein belongs to the UDP-N-acetylglucosamine 2-epimerase family. In terms of assembly, homodimer.

Its subcellular location is the cytoplasm. It catalyses the reaction UDP-N-acetyl-alpha-D-glucosamine = UDP-N-acetyl-alpha-D-mannosamine. The protein operates within bacterial outer membrane biogenesis; enterobacterial common antigen biosynthesis. Its function is as follows. Catalyzes the reversible epimerization at C-2 of UDP-N-acetylglucosamine (UDP-GlcNAc) and thereby provides bacteria with UDP-N-acetylmannosamine (UDP-ManNAc), the activated donor of ManNAc residues. This chain is UDP-N-acetylglucosamine 2-epimerase, found in Escherichia coli O157:H7.